A 307-amino-acid chain; its full sequence is Membrane protein insertase YidC 1 (307 aa).

The signal sequence occupies residues 1-22 (MKSKKGLTLTITLGTLALFLSG). A lipid anchor (N-palmitoyl cysteine) is attached at Cys23. Cys23 carries S-diacylglycerol cysteine lipidation. 5 helical membrane-spanning segments follow: residues 59–79 (YGWAIIGLTVIVRLVLLPMMI), 136–156 (GIGCLPLLIQLPIFSALYYAI), 177–197 (LILAILAFLSYLAQGYLSMIG), 205–225 (TMRLMLIMSPVMILFVSMSAP), and 226–246 (AGLGLYFFVGGLFACLQTLII). The interval 260–307 (ELKKHPIKTPTPTQPKPINATESKPSHPRPQNNAGRGRNAGKQQRHHK) is disordered.

Belongs to the OXA1/ALB3/YidC family. Type 2 subfamily.

The protein localises to the cell membrane. In terms of biological role, required for the insertion and/or proper folding and/or complex formation of integral membrane proteins into the membrane. Involved in integration of membrane proteins that insert both dependently and independently of the Sec translocase complex, as well as at least some lipoproteins. The chain is Membrane protein insertase YidC 1 from Lactiplantibacillus plantarum (strain ATCC BAA-793 / NCIMB 8826 / WCFS1) (Lactobacillus plantarum).